The primary structure comprises 221 residues: Phosphoribosylformylglycinamidine synthase subunit PurQ (221 aa).

Positions 5 to 221 constitute a Glutamine amidotransferase type-1 domain; that stretch reads TVGIVVFPGS…LYTLRSLITQ (217 aa). Residue C89 is the Nucleophile of the active site. Residues H197 and E199 contribute to the active site.

In terms of assembly, part of the FGAM synthase complex composed of 1 PurL, 1 PurQ and 2 PurS subunits.

The protein localises to the cytoplasm. It carries out the reaction N(2)-formyl-N(1)-(5-phospho-beta-D-ribosyl)glycinamide + L-glutamine + ATP + H2O = 2-formamido-N(1)-(5-O-phospho-beta-D-ribosyl)acetamidine + L-glutamate + ADP + phosphate + H(+). The enzyme catalyses L-glutamine + H2O = L-glutamate + NH4(+). The protein operates within purine metabolism; IMP biosynthesis via de novo pathway; 5-amino-1-(5-phospho-D-ribosyl)imidazole from N(2)-formyl-N(1)-(5-phospho-D-ribosyl)glycinamide: step 1/2. In terms of biological role, part of the phosphoribosylformylglycinamidine synthase complex involved in the purines biosynthetic pathway. Catalyzes the ATP-dependent conversion of formylglycinamide ribonucleotide (FGAR) and glutamine to yield formylglycinamidine ribonucleotide (FGAM) and glutamate. The FGAM synthase complex is composed of three subunits. PurQ produces an ammonia molecule by converting glutamine to glutamate. PurL transfers the ammonia molecule to FGAR to form FGAM in an ATP-dependent manner. PurS interacts with PurQ and PurL and is thought to assist in the transfer of the ammonia molecule from PurQ to PurL. The chain is Phosphoribosylformylglycinamidine synthase subunit PurQ from Prochlorococcus marinus subsp. pastoris (strain CCMP1986 / NIES-2087 / MED4).